Reading from the N-terminus, the 307-residue chain is Oxygen-dependent coproporphyrinogen-III oxidase (307 aa).

Ser-99 is a binding site for substrate. A divalent metal cation contacts are provided by His-103 and His-113. The active-site Proton donor is His-113. Position 115–117 (115–117 (NVR)) interacts with substrate. His-152 and His-182 together coordinate a divalent metal cation. Positions 247-282 (YVEFNLVFDRGTLFGLQSGGRTESILMSMPPVANWR) are important for dimerization. 265 to 267 (GGR) is a substrate binding site.

This sequence belongs to the aerobic coproporphyrinogen-III oxidase family. In terms of assembly, homodimer. Requires a divalent metal cation as cofactor.

The protein resides in the cytoplasm. The enzyme catalyses coproporphyrinogen III + O2 + 2 H(+) = protoporphyrinogen IX + 2 CO2 + 2 H2O. It functions in the pathway porphyrin-containing compound metabolism; protoporphyrin-IX biosynthesis; protoporphyrinogen-IX from coproporphyrinogen-III (O2 route): step 1/1. Functionally, involved in the heme biosynthesis. Catalyzes the aerobic oxidative decarboxylation of propionate groups of rings A and B of coproporphyrinogen-III to yield the vinyl groups in protoporphyrinogen-IX. The polypeptide is Oxygen-dependent coproporphyrinogen-III oxidase (Burkholderia cenocepacia (strain ATCC BAA-245 / DSM 16553 / LMG 16656 / NCTC 13227 / J2315 / CF5610) (Burkholderia cepacia (strain J2315))).